A 258-amino-acid chain; its full sequence is Imidazole glycerol phosphate synthase subunit HisF (258 aa).

Active-site residues include Asp11 and Asp130.

Belongs to the HisA/HisF family. In terms of assembly, heterodimer of HisH and HisF.

The protein localises to the cytoplasm. It carries out the reaction 5-[(5-phospho-1-deoxy-D-ribulos-1-ylimino)methylamino]-1-(5-phospho-beta-D-ribosyl)imidazole-4-carboxamide + L-glutamine = D-erythro-1-(imidazol-4-yl)glycerol 3-phosphate + 5-amino-1-(5-phospho-beta-D-ribosyl)imidazole-4-carboxamide + L-glutamate + H(+). The protein operates within amino-acid biosynthesis; L-histidine biosynthesis; L-histidine from 5-phospho-alpha-D-ribose 1-diphosphate: step 5/9. IGPS catalyzes the conversion of PRFAR and glutamine to IGP, AICAR and glutamate. The HisF subunit catalyzes the cyclization activity that produces IGP and AICAR from PRFAR using the ammonia provided by the HisH subunit. The sequence is that of Imidazole glycerol phosphate synthase subunit HisF from Stenotrophomonas maltophilia (strain K279a).